Here is a 281-residue protein sequence, read N- to C-terminus: Ras-related protein Rab-40C (281 aa).

S23, G26, K27, and S46 together coordinate GTP. The segment at 41–49 (SPYAYSNGI) is switch-I. Mg(2+)-binding residues include S46 and D69. Residues G72, N126, and R127 each coordinate GTP. The tract at residues 72 to 88 (GQGRFCTIFRSYSRGAQ) is switch-II. Residues 175–228 (LMRHGMEKIWRPNRVFSLQDLCCRAIVSCTPVHLIDKLPLPVTIKSHLKSFSMA) form the SOCS box domain. Residues 245–281 (SGAGGSGSKGNSLKRSKSIRPPQSPPQNCSRSNCKIS) are disordered. A compositionally biased stretch (polar residues) spans 270-281 (PQNCSRSNCKIS). A lipid anchor (S-palmitoyl cysteine) is attached at C273. C278 carries S-geranylgeranyl cysteine lipidation.

Belongs to the small GTPase superfamily. Rab family. As to quaternary structure, component of the cullin-5-RING E3 ubiquitin-protein ligase complex (ECS(RAB40C) complex) composed of CUL5, Elongin BC (ELOB and ELOC), RNF7/RBX2 and RAB40C. Interacts with protein phosphatase 6 (PP6) complex components ANKRD28, ANKRD52, PPP6C, PP6R1 and PP6R2; the interaction leads to ANKRD28 ubiquitination and decreased PP6 activity. Interacts with DAB2IP; DAB2IP acts as a GAP for RAB40C. Requires Mg(2+) as cofactor.

It is found in the cell membrane. The protein resides in the cytoplasm. Its subcellular location is the cytosol. It localises to the golgi apparatus membrane. It carries out the reaction GTP + H2O = GDP + phosphate + H(+). Its pathway is protein modification; protein ubiquitination. Regulated by guanine nucleotide exchange factors (GEFs) which promote the exchange of bound GDP for free GTP. Regulated by GTPase activating proteins (GAPs) including DAB2IP, which increase the GTP hydrolysis activity. Inhibited by GDP dissociation inhibitors (GDIs). Its function is as follows. RAB40C small GTPase acts as substrate-recognition component of the ECS(RAB40C) E3 ubiquitin ligase complex which mediates the ubiquitination and subsequent proteasomal degradation of target proteins. The Rab40 subfamily belongs to the Rab family that are key regulators of intracellular membrane trafficking, from the formation of transport vesicles to their fusion with membranes. Rabs cycle between an inactive GDP-bound form and an active GTP-bound form that is able to recruit to membranes different sets of downstream effectors directly responsible for vesicle formation, movement, tethering and fusion. As part of the ECS(RAB40C) complex, mediates ANKRD28 ubiquitination and degradation, thereby inhibiting protein phosphatase 6 (PP6) complex activity and focal adhesion assembly during cell migration. Also negatively regulate lipid droplets accumulation in a GTP-dependent manner. The sequence is that of Ras-related protein Rab-40C from Mus musculus (Mouse).